The primary structure comprises 598 residues: NADH-quinone oxidoreductase subunit C/D (598 aa).

Positions 1–189 (MTDLTTSDSL…DPYVLTKQKE (189 aa)) are NADH dehydrogenase I subunit C. The interval 213–598 (DFMFLNLGPN…IDFVMSDVDR (386 aa)) is NADH dehydrogenase I subunit D.

It in the N-terminal section; belongs to the complex I 30 kDa subunit family. This sequence in the C-terminal section; belongs to the complex I 49 kDa subunit family. As to quaternary structure, NDH-1 is composed of 13 different subunits. Subunits NuoB, CD, E, F, and G constitute the peripheral sector of the complex.

The protein localises to the cell inner membrane. It catalyses the reaction a quinone + NADH + 5 H(+)(in) = a quinol + NAD(+) + 4 H(+)(out). Its function is as follows. NDH-1 shuttles electrons from NADH, via FMN and iron-sulfur (Fe-S) centers, to quinones in the respiratory chain. The immediate electron acceptor for the enzyme in this species is believed to be ubiquinone. Couples the redox reaction to proton translocation (for every two electrons transferred, four hydrogen ions are translocated across the cytoplasmic membrane), and thus conserves the redox energy in a proton gradient. The sequence is that of NADH-quinone oxidoreductase subunit C/D from Yersinia pestis bv. Antiqua (strain Angola).